The sequence spans 308 residues: tRNA dimethylallyltransferase (308 aa).

An ATP-binding site is contributed by 14 to 21 (GPTASGKT). 16 to 21 (TASGKT) serves as a coordination point for substrate. Interaction with substrate tRNA regions lie at residues 39-42 (DSAL), 163-167 (QRLSR), and 244-249 (RCVGYR).

It belongs to the IPP transferase family. As to quaternary structure, monomer. It depends on Mg(2+) as a cofactor.

It catalyses the reaction adenosine(37) in tRNA + dimethylallyl diphosphate = N(6)-dimethylallyladenosine(37) in tRNA + diphosphate. Functionally, catalyzes the transfer of a dimethylallyl group onto the adenine at position 37 in tRNAs that read codons beginning with uridine, leading to the formation of N6-(dimethylallyl)adenosine (i(6)A). The protein is tRNA dimethylallyltransferase of Shewanella oneidensis (strain ATCC 700550 / JCM 31522 / CIP 106686 / LMG 19005 / NCIMB 14063 / MR-1).